Reading from the N-terminus, the 317-residue chain is Aspartate carbamoyltransferase catalytic subunit (317 aa).

Carbamoyl phosphate is bound by residues Arg65 and Thr66. Residue Lys93 coordinates L-aspartate. The carbamoyl phosphate site is built by Arg115, His145, and Gln148. L-aspartate-binding residues include Arg178 and Arg233. 2 residues coordinate carbamoyl phosphate: Gly274 and Pro275.

This sequence belongs to the aspartate/ornithine carbamoyltransferase superfamily. ATCase family. Heterododecamer (2C3:3R2) of six catalytic PyrB chains organized as two trimers (C3), and six regulatory PyrI chains organized as three dimers (R2).

The catalysed reaction is carbamoyl phosphate + L-aspartate = N-carbamoyl-L-aspartate + phosphate + H(+). Its pathway is pyrimidine metabolism; UMP biosynthesis via de novo pathway; (S)-dihydroorotate from bicarbonate: step 2/3. Functionally, catalyzes the condensation of carbamoyl phosphate and aspartate to form carbamoyl aspartate and inorganic phosphate, the committed step in the de novo pyrimidine nucleotide biosynthesis pathway. In Methylobacillus flagellatus (strain ATCC 51484 / DSM 6875 / VKM B-1610 / KT), this protein is Aspartate carbamoyltransferase catalytic subunit.